Consider the following 669-residue polypeptide: DNA polymerase epsilon subunit B (669 aa).

Positions 96–115 (QISTRNGSADNLAKKAERSD) are disordered.

The protein belongs to the DNA polymerase epsilon subunit B family. As to quaternary structure, heterotetramer. Consists of four subunits: POL2, DPB2, DPB3 and DPB4.

It localises to the nucleus. Functionally, as accessory component of the DNA polymerase epsilon (DNA polymerase II) participates in chromosomal DNA replication. In Debaryomyces hansenii (strain ATCC 36239 / CBS 767 / BCRC 21394 / JCM 1990 / NBRC 0083 / IGC 2968) (Yeast), this protein is DNA polymerase epsilon subunit B (DPB2).